We begin with the raw amino-acid sequence, 446 residues long: Glutamate-1-semialdehyde 2,1-aminomutase (446 aa).

The residue at position 264 (lysine 264) is an N6-(pyridoxal phosphate)lysine.

It belongs to the class-III pyridoxal-phosphate-dependent aminotransferase family. HemL subfamily. Pyridoxal 5'-phosphate is required as a cofactor.

The protein resides in the cytoplasm. The catalysed reaction is (S)-4-amino-5-oxopentanoate = 5-aminolevulinate. It functions in the pathway porphyrin-containing compound metabolism; protoporphyrin-IX biosynthesis; 5-aminolevulinate from L-glutamyl-tRNA(Glu): step 2/2. The sequence is that of Glutamate-1-semialdehyde 2,1-aminomutase from Natronomonas pharaonis (strain ATCC 35678 / DSM 2160 / CIP 103997 / JCM 8858 / NBRC 14720 / NCIMB 2260 / Gabara) (Halobacterium pharaonis).